Reading from the N-terminus, the 523-residue chain is Frizzled-4 (523 aa).

The signal sequence occupies residues 1–22 (MGARSLTLLYLLCCLVVGLIAG). Residues 23–198 (FGEEEERSCD…KCGYDSGLYN (176 aa)) are Extracellular-facing. One can recognise an FZ domain in the interval 26–147 (EEERSCDPIR…NDHNHMCMEG (122 aa)). 8 disulfide bridges follow: Cys-31–Cys-92, Cys-39–Cys-85, Cys-76–Cys-114, Cys-103–Cys-144, Cys-107–Cys-131, Cys-167–Cys-186, Cys-190–Cys-268, and Cys-288–Cys-363. The N-linked (GlcNAc...) asparagine glycan is linked to Asn-45. N-linked (GlcNAc...) asparagine glycosylation is present at Asn-130. Residues 199 to 229 (RLSKEFTDIWMAVWASLCFISTAFTVLTFLI) form a helical membrane-spanning segment. Residues 230-235 (DSSRFC) are Cytoplasmic-facing. Residues 236–261 (YPERPIIFLSMCYNIYSIAYIVRLTV) traverse the membrane as a helical segment. Residues 262–285 (GRERISCDFEEAAEPVLIQEGLKN) lie on the Extracellular side of the membrane. The chain crosses the membrane as a helical span at residues 286 to 319 (TGCAIIFLLMYFFGMASSIWWVILTLTWFLAAGL). The Cytoplasmic portion of the chain corresponds to 320–322 (KWG). A helical transmembrane segment spans residues 323 to 351 (HEAIEMHSSYFHIAAWAIPAVKTIVILIM). At 352–369 (RLVDADELTGLCYVGNQN) the chain is on the extracellular side. A helical membrane pass occupies residues 370–396 (IDALTGFVVAPLFTYLVIGTLFIAAGL). At 397 to 417 (VALFKIRSNLQKDGTKTDKLE) the chain is on the cytoplasmic side. The helical transmembrane segment at 418 to 443 (RLMVKIGVFSVLYTVPATCVIACYFY) threads the bilayer. Residues 444-459 (EVSNWNVFRYTADDSN) are Extracellular-facing. Residues 460–481 (MAVEMLNIFMSLLVGITSGMWI) form a helical membrane-spanning segment. Topologically, residues 482-523 (WSAKTLHTWQKCTNRLVNSGKVKRKKRVDGWVKPGKGNETVV) are cytoplasmic. A Lys-Thr-X-X-X-Trp motif, mediates interaction with the PDZ domain of Dvl family members motif is present at residues 485–490 (KTLHTW). The PDZ-binding motif lies at 521-523 (TVV).

The protein belongs to the G-protein coupled receptor Fz/Smo family. As to quaternary structure, interacts (via FZ domain) with tsku; tsku competes with wnt2b for binding to fzd4, inhibiting Wnt signaling and repressing peripheral eye development.

It localises to the cell membrane. Its function is as follows. Receptor for Wnt proteins. Most frizzled receptors are coupled to the beta-catenin canonical signaling pathway, which leads to the activation of disheveled proteins, inhibition of GSK-3 kinase, nuclear accumulation of beta-catenin and activation of Wnt target genes. A second signaling pathway involving PKC and calcium fluxes has been seen for some family members, but it is not yet clear if it represents a distinct pathway or if it can be integrated in the canonical pathway, as PKC seems to be required for Wnt-mediated inactivation of GSK-3 kinase. Both pathways seem to involve interactions with G-proteins. May be involved in transduction and intercellular transmission of polarity information during tissue morphogenesis and/or in differentiated tissues. Activated by Wnt5A. The chain is Frizzled-4 (fzd4) from Xenopus laevis (African clawed frog).